Consider the following 266-residue polypeptide: Type III pantothenate kinase (266 aa).

9-16 (DAGNSRIK) is an ATP binding site. Residues Tyr96 and 103–106 (GSDR) contribute to the substrate site. Asp105 functions as the Proton acceptor in the catalytic mechanism. Thr129 provides a ligand contact to ATP. Thr189 is a substrate binding site.

It belongs to the type III pantothenate kinase family. Homodimer. NH4(+) serves as cofactor. The cofactor is K(+).

The protein resides in the cytoplasm. It catalyses the reaction (R)-pantothenate + ATP = (R)-4'-phosphopantothenate + ADP + H(+). The protein operates within cofactor biosynthesis; coenzyme A biosynthesis; CoA from (R)-pantothenate: step 1/5. Functionally, catalyzes the phosphorylation of pantothenate (Pan), the first step in CoA biosynthesis. This Burkholderia lata (strain ATCC 17760 / DSM 23089 / LMG 22485 / NCIMB 9086 / R18194 / 383) protein is Type III pantothenate kinase.